We begin with the raw amino-acid sequence, 840 residues long: Heat shock 70 kDa protein 4 (840 aa).

Residue lysine 53 is modified to N6-acetyllysine. At serine 76 the chain carries Phosphoserine. Phosphotyrosine occurs at positions 89 and 336. Phosphoserine is present on residues serine 393 and serine 415. Lysine 430 carries the N6-acetyllysine modification. The interval 500-575 (VHKSEENEEP…QAKKAKVKTS (76 aa)) is disordered. Over residues 514-533 (QNAKEEEKMQVDQEEPHVEE) the composition is skewed to basic and acidic residues. Threonine 538 is modified (phosphothreonine). Phosphoserine is present on residues serine 546 and serine 647. A Phosphotyrosine modification is found at tyrosine 660. Lysine 679 carries the N6-acetyllysine modification. Serine 756 bears the Phosphoserine mark. An N6-methyllysine modification is found at lysine 773. Positions 779–840 (CSPIISKPKP…DKKLPEMDID (62 aa)) are disordered. 2 stretches are compositionally biased toward basic and acidic residues: residues 788 to 799 (PKVEPPKEEQKN) and 829 to 840 (DSDKKLPEMDID).

The protein belongs to the heat shock protein 70 family. As to quaternary structure, interacts with TJP1/ZO-1.

It localises to the cytoplasm. The chain is Heat shock 70 kDa protein 4 (HSPA4) from Homo sapiens (Human).